A 620-amino-acid chain; its full sequence is Probable potassium transport system protein Kup (620 aa).

The next 12 membrane-spanning stretches (helical) occupy residues 8 to 28, 50 to 70, 102 to 122, 136 to 156, 168 to 188, 211 to 231, 246 to 266, 284 to 304, 336 to 356, 368 to 388, 393 to 413, and 415 to 435; these read VGLLVSAVGVVFGDIGTSPLY, VLSLVFWTVMLLVTVKYVILI, MLLGVIAAALFYGDSMITPAI, PDLKAYVVPITALVLTGLFAI, FGPVMCLWFVTLALLGIANIV, LMSFYALGTVVLAVTGGEALY, WFSLVLPALLLNYFGQGALLI, MVMPMVALATLATVIASQAVI, IYVPFTNWTLYFAVMALVIGF, IAVTGTMMIDTILVSFVMALL, MALVIVVAGTLLLVDFAYFAA, and IIKVAQGGWFPLFIGFISFTV.

It belongs to the HAK/KUP transporter (TC 2.A.72) family.

The protein localises to the cell inner membrane. It catalyses the reaction K(+)(in) + H(+)(in) = K(+)(out) + H(+)(out). Functionally, transport of potassium into the cell. Likely operates as a K(+):H(+) symporter. The protein is Probable potassium transport system protein Kup of Rhodopseudomonas palustris (strain HaA2).